Reading from the N-terminus, the 497-residue chain is Guanosine-5'-triphosphate,3'-diphosphate pyrophosphatase (497 aa).

It belongs to the GppA/Ppx family. GppA subfamily.

The enzyme catalyses guanosine 3'-diphosphate 5'-triphosphate + H2O = guanosine 3',5'-bis(diphosphate) + phosphate + H(+). It participates in purine metabolism; ppGpp biosynthesis; ppGpp from GTP: step 2/2. Catalyzes the conversion of pppGpp to ppGpp. Guanosine pentaphosphate (pppGpp) is a cytoplasmic signaling molecule which together with ppGpp controls the 'stringent response', an adaptive process that allows bacteria to respond to amino acid starvation, resulting in the coordinated regulation of numerous cellular activities. The protein is Guanosine-5'-triphosphate,3'-diphosphate pyrophosphatase of Vibrio cholerae serotype O1 (strain ATCC 39541 / Classical Ogawa 395 / O395).